We begin with the raw amino-acid sequence, 352 residues long: Sphingosine 1-phosphate receptor 2 (352 aa).

Over 1–34 (MGGLYSEYLNPEKVQEHYNYTKETLDMQETPSRK) the chain is Extracellular. N-linked (GlcNAc...) asparagine glycosylation occurs at asparagine 19. Residues 35–59 (VASAFIIILCCAIVVENLLVLIAVA) traverse the membrane as a helical segment. The Cytoplasmic segment spans residues 60-66 (RNSKFHS). The helical transmembrane segment at 67–95 (AMYLFLGNLAASDLLAGVAFVANTLLSGP) threads the bilayer. The Extracellular segment spans residues 96-109 (VTLSLTPLQWFARE). A helical membrane pass occupies residues 110–128 (GSAFITLSASVFSLLAIAI). Topologically, residues 129–147 (ERQVAIAKVKLYGSDKSCR) are cytoplasmic. Residues 148–173 (MLMLIGASWLISLILGGLPILGWNCL) traverse the membrane as a helical segment. Residues 174–189 (DHLEACSTVLPLYAKH) are Extracellular-facing. The helical transmembrane segment at 190 to 210 (YVLCVVTIFSVILLAIVALYV) threads the bilayer. Topologically, residues 211–233 (RIYFVVRSSHADVAGPQTLALLK) are cytoplasmic. A helical membrane pass occupies residues 234–255 (TVTIVLGVFIICWLPAFSILLL). Residues 256-271 (DSTCPVRACPVLYKAH) are Extracellular-facing. The helical transmembrane segment at 272–292 (YFFAFATLNSLLNPVIYTWRS) threads the bilayer. The Cytoplasmic segment spans residues 293 to 352 (RDLRREVLRPLLCWRQGKGATGRRGGNPGHRLLPLRSSSSLERGLHMPTSPTFLEGNTVV). Cysteine 305 carries S-palmitoyl cysteine lipidation.

This sequence belongs to the G-protein coupled receptor 1 family. As to expression, expressed in all developing tissues with highest levels detected in primitive, transformed cells. Relative abundance: lung &gt; kidney = skin = gut &gt; spleen &gt; brain &gt; liver.

The protein localises to the cell membrane. In terms of biological role, receptor for the lysosphingolipid sphingosine 1-phosphate (S1P). S1P is a bioactive lysophospholipid that elicits diverse physiological effects on most types of cells and tissues. Receptor for the chemokine-like protein FAM19A5. Mediates the inhibitory effect of FAM19A5 on vascular smooth muscle cell proliferation and migration. In lymphoid follicles, couples the binding of S1P to the activation of GNA13 and downstream inhibition of AKT activation leading to suppression of germinal center (GC) B cell growth and migration outside the GC niche. In Rattus norvegicus (Rat), this protein is Sphingosine 1-phosphate receptor 2 (S1pr2).